A 162-amino-acid polypeptide reads, in one-letter code: MTVSSEEISGILDGVLSLPVKLYSLKVNQRPNHSLIEVVLDNLEHPYGSVSLLECEQVSRKLKEELERISPDLDYTLKVSSAGAERKLNLPGDLDRFRGIPIRLVFRSEESEKEQEGIFRVVNRDGDQIVLEKFQKGKKSVVKKQTTLNLKDILKGNLYVNI.

It belongs to the RimP family.

It localises to the cytoplasm. Its function is as follows. Required for maturation of 30S ribosomal subunits. This chain is Ribosome maturation factor RimP, found in Leptospira interrogans serogroup Icterohaemorrhagiae serovar copenhageni (strain Fiocruz L1-130).